A 120-amino-acid polypeptide reads, in one-letter code: NAD(P)H-quinone oxidoreductase subunit 3, chloroplastic (120 aa).

Helical transmembrane passes span 9-29, 64-84, and 88-108; these read IFWAFLLISSAIPVLAFLISG, MFALVFVVFDVETVFLYPWAM, and VLGVSAFIEAFIFVLILILGL.

The protein belongs to the complex I subunit 3 family. As to quaternary structure, NDH is composed of at least 16 different subunits, 5 of which are encoded in the nucleus.

The protein localises to the plastid. It is found in the chloroplast thylakoid membrane. It catalyses the reaction a plastoquinone + NADH + (n+1) H(+)(in) = a plastoquinol + NAD(+) + n H(+)(out). It carries out the reaction a plastoquinone + NADPH + (n+1) H(+)(in) = a plastoquinol + NADP(+) + n H(+)(out). Its function is as follows. NDH shuttles electrons from NAD(P)H:plastoquinone, via FMN and iron-sulfur (Fe-S) centers, to quinones in the photosynthetic chain and possibly in a chloroplast respiratory chain. The immediate electron acceptor for the enzyme in this species is believed to be plastoquinone. Couples the redox reaction to proton translocation, and thus conserves the redox energy in a proton gradient. This chain is NAD(P)H-quinone oxidoreductase subunit 3, chloroplastic, found in Arabidopsis thaliana (Mouse-ear cress).